Here is a 125-residue protein sequence, read N- to C-terminus: Profilin-P (125 aa).

Position 2 is an N-acetylserine (S2).

The protein belongs to the profilin family. In terms of assembly, occurs in many kinds of cells as a complex with monomeric actin in a 1:1 ratio.

It localises to the cytoplasm. The protein localises to the cytoskeleton. Binds to actin and affects the structure of the cytoskeleton. At high concentrations, profilin prevents the polymerization of actin, whereas it enhances it at low concentrations. By binding to PIP2, it inhibits the formation of IP3 and DG. The chain is Profilin-P (PROP) from Physarum polycephalum (Slime mold).